We begin with the raw amino-acid sequence, 347 residues long: Heat-inducible transcription repressor HrcA (347 aa).

Belongs to the HrcA family.

Negative regulator of class I heat shock genes (grpE-dnaK-dnaJ and groELS operons). Prevents heat-shock induction of these operons. This is Heat-inducible transcription repressor HrcA from Mycoplasmopsis pulmonis (strain UAB CTIP) (Mycoplasma pulmonis).